A 180-amino-acid polypeptide reads, in one-letter code: ATP-dependent protease subunit HslV (180 aa).

Residue T5 is part of the active site. Residues G165, C168, and T171 each contribute to the Na(+) site.

The protein belongs to the peptidase T1B family. HslV subfamily. In terms of assembly, a double ring-shaped homohexamer of HslV is capped on each side by a ring-shaped HslU homohexamer. The assembly of the HslU/HslV complex is dependent on binding of ATP.

The protein localises to the cytoplasm. The enzyme catalyses ATP-dependent cleavage of peptide bonds with broad specificity.. Allosterically activated by HslU binding. Its function is as follows. Protease subunit of a proteasome-like degradation complex believed to be a general protein degrading machinery. This chain is ATP-dependent protease subunit HslV, found in Helicobacter hepaticus (strain ATCC 51449 / 3B1).